Here is a 471-residue protein sequence, read N- to C-terminus: tRNA modification GTPase MnmE (471 aa).

(6S)-5-formyl-5,6,7,8-tetrahydrofolate-binding residues include R26, E83, and K136. The TrmE-type G domain maps to 232-393; the sequence is GLRVVLAGQP…LRRRLLQLAG (162 aa). N242 contributes to the K(+) binding site. Residues 242–247, 261–267, 286–289, 354–357, and 374–376 contribute to the GTP site; these read NVGKSS, TPIAGTT, DTAG, NKAD, and SAR. S246 serves as a coordination point for Mg(2+). 3 residues coordinate K(+): T261, I263, and T266. T267 provides a ligand contact to Mg(2+). K471 is a binding site for (6S)-5-formyl-5,6,7,8-tetrahydrofolate.

The protein belongs to the TRAFAC class TrmE-Era-EngA-EngB-Septin-like GTPase superfamily. TrmE GTPase family. In terms of assembly, homodimer. Heterotetramer of two MnmE and two MnmG subunits. K(+) serves as cofactor.

The protein localises to the cytoplasm. In terms of biological role, exhibits a very high intrinsic GTPase hydrolysis rate. Involved in the addition of a carboxymethylaminomethyl (cmnm) group at the wobble position (U34) of certain tRNAs, forming tRNA-cmnm(5)s(2)U34. The chain is tRNA modification GTPase MnmE from Methylibium petroleiphilum (strain ATCC BAA-1232 / LMG 22953 / PM1).